Consider the following 385-residue polypeptide: Multidrug export protein AcrE (385 aa).

The N-terminal stretch at Met-1 to Gly-23 is a signal peptide. The N-palmitoyl cysteine moiety is linked to residue Cys-24. Cys-24 is lipidated: S-diacylglycerol cysteine. A disordered region spans residues Ala-366 to Lys-385. The segment covering Lys-373 to Lys-385 has biased composition (polar residues).

Belongs to the membrane fusion protein (MFP) (TC 8.A.1) family. As to quaternary structure, part of the tripartite efflux system AcrEF-TolC, which is composed of an inner membrane transporter, AcrF, a periplasmic membrane fusion protein, AcrE, and an outer membrane component, TolC. The complex forms a large protein conduit and can translocate molecules across both the inner and outer membranes.

Its subcellular location is the cell inner membrane. Its function is as follows. Part of the tripartite efflux system AcrEF-TolC. Involved in the efflux of indole and organic solvents. This chain is Multidrug export protein AcrE (acrE), found in Escherichia coli (strain K12).